We begin with the raw amino-acid sequence, 96 residues long: Ubiquitin-like protein NEDD8-like protein 1 (96 aa).

Residues 75 to 96 form a disordered region; sequence SQSDNSEKSEKSGKSEKDCILM. Residues 79 to 96 are compositionally biased toward basic and acidic residues; sequence NSEKSEKSGKSEKDCILM.

The protein belongs to the ubiquitin family.

The polypeptide is Ubiquitin-like protein NEDD8-like protein 1 (nedd8l1) (Dictyostelium discoideum (Social amoeba)).